Consider the following 68-residue polypeptide: Small ribosomal subunit protein eS17 (68 aa).

It belongs to the eukaryotic ribosomal protein eS17 family.

The polypeptide is Small ribosomal subunit protein eS17 (Staphylothermus marinus (strain ATCC 43588 / DSM 3639 / JCM 9404 / F1)).